The following is a 201-amino-acid chain: METEQDEMGQEEMSPEMALDKDPFQLTVEDVYDISHVVGQDLLKINREARGVSSLVSDLQFKIVRVLEMLEALVNQSSLSAEELKMERDNLKAEVDRLLRDGPQMGVGPDKMVIDLTDPNRPRFTLQELRDVLQERNKLKVQLLVAQDELQCYKSGIIPSPDDQIVTLENESIITSSPRSNASKEKSTVKSLFSFKQGKNT.

The 95-residue stretch at Ser14–Gly108 folds into the RH1 domain. Residues Leu67–Ser155 adopt a coiled-coil conformation. The 77-residue stretch at Arg121–Gln197 folds into the RH2 domain. The tract at residues Thr175–Thr201 is disordered.

Belongs to the RILPL family.

The protein resides in the cytoplasm. It is found in the cytosol. The protein localises to the cytoskeleton. Its subcellular location is the microtubule organizing center. It localises to the centrosome. The protein resides in the cell projection. It is found in the cilium. Involved in cell shape and neuronal morphogenesis, positively regulating the establishment and maintenance of dendritic spines. Plays a role in cellular protein transport. The chain is RILP-like protein 2 (rilpl2) from Xenopus laevis (African clawed frog).